Reading from the N-terminus, the 168-residue chain is Small ribosomal subunit protein bS16 (168 aa).

The segment at 110–168 (LAEAEGGPSNEATQPKKKKAPAKKAASDIEATADPAGNADKSEPAAEGEDATVAGATEG) is disordered.

The protein belongs to the bacterial ribosomal protein bS16 family.

The sequence is that of Small ribosomal subunit protein bS16 from Mycobacterium sp. (strain JLS).